A 369-amino-acid chain; its full sequence is MTNHNALISDAKGSIGVAVRVPNQSLFSPGGGRYISIPRKKLVQKLEADPSQTRIHTWIEAMRASSPTRTRPGNISPLPESDEEDEYSSWMAQHPSALTMFEEIAEASKGKQIVMFLDYDGTLSPIVENPDRAYMSEEMREAVKGVARYFPTAIVTGRCRDKVRRFVKLPGLYYAGSHGMDIKGPSKRNKHNKNNKGVLFQAANEFLPMIDKVSKCLVEKMRDIEGANVENNKFCVSVHYRCVDQKDWGLVAEHVTSILSEYPKLRLTQGRKVLEIRPTIKWDKGKALEFLLESLGFANSNDVLPIYIGDDRTDEDAFKVLRNKGQGFGILVSKIPKETSATYSLQEPSEVGEFLQRLVEWKQMSLRGR.

Positions 63 to 85 (RASSPTRTRPGNISPLPESDEED) are disordered.

The protein belongs to the trehalose phosphatase family. A divalent metal cation is required as a cofactor.

It carries out the reaction alpha,alpha-trehalose 6-phosphate + H2O = alpha,alpha-trehalose + phosphate. The protein operates within glycan biosynthesis; trehalose biosynthesis. In terms of biological role, removes the phosphate from trehalose 6-phosphate to produce free trehalose. Trehalose accumulation in plant may improve abiotic stress tolerance. The protein is Probable trehalose-phosphate phosphatase D (TPPD) of Arabidopsis thaliana (Mouse-ear cress).